The chain runs to 94 residues: Phosphoribosyl-ATP pyrophosphatase (94 aa).

It belongs to the PRA-PH family.

The protein localises to the cytoplasm. It carries out the reaction 1-(5-phospho-beta-D-ribosyl)-ATP + H2O = 1-(5-phospho-beta-D-ribosyl)-5'-AMP + diphosphate + H(+). The protein operates within amino-acid biosynthesis; L-histidine biosynthesis; L-histidine from 5-phospho-alpha-D-ribose 1-diphosphate: step 2/9. In Pyrobaculum neutrophilum (strain DSM 2338 / JCM 9278 / NBRC 100436 / V24Sta) (Thermoproteus neutrophilus), this protein is Phosphoribosyl-ATP pyrophosphatase.